Consider the following 378-residue polypeptide: MSLSKKRKLESGDSGGAGAGGEGAEEENGGEQEAAPPRPRRTKSERDQLYYECYSDVSVHEEMIADQVRTEAYRLGILKNWAALRGKTVLDVGAGTGILSIFCAQAGARRVYAVEASAIWQQAREVVRLNGLEDRVHVLPGPVETVELPERVDAIVSEWMGYGLLHESMLSSVLHARTKWLKEGGLLLPASAELFVAPISDQMLEWRLGFWSQVKQHYGVDMSCMESFATRCLMGHSEIVVQDLSGEDVLARPQRFAQLELARAGLEQELEAGVGGRFRCSCYGSAPLHGFAVWFQVTFPGGDSEKPLVLSTSPFHPATHWKQALLYLNEPVPVEQDTDISGEITLLPSPDNPRRLRILLRYKVGDHEEKTKDFAMED.

The segment at 1–46 (MSLSKKRKLESGDSGGAGAGGEGAEEENGGEQEAAPPRPRRTKSER) is disordered. Residues 13-22 (DSGGAGAGGE) show a composition bias toward gly residues. Arginine 38 carries the post-translational modification Asymmetric dimethylarginine; by autocatalysis. Positions 47–377 (DQLYYECYSD…EEKTKDFAME (331 aa)) constitute an SAM-dependent MTase PRMT-type domain. Positions 60, 69, 93, 115, and 144 each coordinate S-adenosyl-L-methionine. Catalysis depends on residues glutamate 158 and glutamate 167.

Belongs to the class I-like SAM-binding methyltransferase superfamily. Protein arginine N-methyltransferase family. PRMT6 subfamily. As to quaternary structure, interacts with (and methylates) HIV-1 Tat, Rev and Nucleocapsid protein p7 (NC). Interacts with EPB41L3 and NCOA1. Automethylation enhances its stability.

Its subcellular location is the nucleus. It carries out the reaction L-arginyl-[protein] + 2 S-adenosyl-L-methionine = N(omega),N(omega)-dimethyl-L-arginyl-[protein] + 2 S-adenosyl-L-homocysteine + 2 H(+). Arginine methyltransferase that can catalyze the formation of both omega-N monomethylarginine (MMA) and asymmetrical dimethylarginine (aDMA), with a strong preference for the formation of aDMA. Preferentially methylates arginyl residues present in a glycine and arginine-rich domain and displays preference for monomethylated substrates. Specifically mediates the asymmetric dimethylation of histone H3 'Arg-2' to form H3R2me2a. H3R2me2a represents a specific tag for epigenetic transcriptional repression and is mutually exclusive with methylation on histone H3 'Lys-4' (H3K4me2 and H3K4me3). Acts as a transcriptional repressor of various genes such as HOXA2, THBS1 and TP53. Repression of TP53 blocks cellular senescence. Also methylates histone H2A and H4 'Arg-3' (H2AR3me and H4R3me, respectively). Acts as a regulator of DNA base excision during DNA repair by mediating the methylation of DNA polymerase beta (POLB), leading to the stimulation of its polymerase activity by enhancing DNA binding and processivity. Methylates HMGA1. Regulates alternative splicing events. Acts as a transcriptional coactivator of a number of steroid hormone receptors including ESR1, ESR2, PGR and NR3C1. Promotes fasting-induced transcriptional activation of the gluconeogenic program through methylation of the CRTC2 transcription coactivator. Methylates GPS2, protecting GPS2 from ubiquitination and degradation. Methylates SIRT7, inhibiting SIRT7 histone deacetylase activity and promoting mitochondria biogenesis. This is Protein arginine N-methyltransferase 6 (Prmt6) from Mus musculus (Mouse).